A 274-amino-acid chain; its full sequence is 2,3,4,5-tetrahydropyridine-2,6-dicarboxylate N-succinyltransferase (274 aa).

Arg-106 and Asp-143 together coordinate substrate.

This sequence belongs to the transferase hexapeptide repeat family. In terms of assembly, homotrimer.

The protein localises to the cytoplasm. The enzyme catalyses (S)-2,3,4,5-tetrahydrodipicolinate + succinyl-CoA + H2O = (S)-2-succinylamino-6-oxoheptanedioate + CoA. It functions in the pathway amino-acid biosynthesis; L-lysine biosynthesis via DAP pathway; LL-2,6-diaminopimelate from (S)-tetrahydrodipicolinate (succinylase route): step 1/3. In Acidovorax ebreus (strain TPSY) (Diaphorobacter sp. (strain TPSY)), this protein is 2,3,4,5-tetrahydropyridine-2,6-dicarboxylate N-succinyltransferase.